The primary structure comprises 390 residues: Phosphoglycerate kinase (390 aa).

Residues 21-23 (DMN), arginine 36, 59-62 (HLGR), arginine 113, and arginine 146 each bind substrate. ATP-binding positions include lysine 197, glutamate 319, and 345–348 (GGDT).

Belongs to the phosphoglycerate kinase family. In terms of assembly, monomer.

It is found in the cytoplasm. It carries out the reaction (2R)-3-phosphoglycerate + ATP = (2R)-3-phospho-glyceroyl phosphate + ADP. It participates in carbohydrate degradation; glycolysis; pyruvate from D-glyceraldehyde 3-phosphate: step 2/5. This chain is Phosphoglycerate kinase, found in Laribacter hongkongensis (strain HLHK9).